Consider the following 157-residue polypeptide: Protein Smg homolog (157 aa).

Belongs to the Smg family.

The polypeptide is Protein Smg homolog (Aliivibrio fischeri (strain MJ11) (Vibrio fischeri)).